The following is a 590-amino-acid chain: MKKSWTWTWRVPAELLLLCAALGCLCVPGSRSERPRSLEPTVVNRSLAKSRHSRSVDATPMPIDCELSSWSSWTMCDPCQKKRYRHAYLLRPSQFNGEPCNFSDKEVEDCATSRPCRSQVRCEGFVCAQTGRCVNRRLLCNGDNDCGDQSDEANCRKIYKKCHHEMEQYWAIGSLASGINLFTNSLEGPVLDHRYYAGGCNPHYILDMRFRKPYNVESYTPQTQGKYKFALAEYESYSDFERNVMEKTYSKSTFNLGFKIPSIFEFGINTESDQLMNYISRTKRFSHTKSKFLHARSALEVAHYKLKPRNLMLHYDFLQRVQRVPLEYSYGEYRDLFRDFGHHFITEAVLGGIYEYTLIMNKEAMERADYSLNDVQACAKNDFKLGAAIEEVYVSLGVSTSKCRGILNEIKDRNKRDTMVQDLVVLVRGGASEHITALAYSDLPTADLMQEWGDAVQYNPAIIKIKVEPLYELVTATDVAYSSTVKQNMRQALEEFQGEVSPCRCAPCQGNGVPVQKGSRCDCICPVGFQGSACEITSRKNVPIDGRWSCWSRWSSCSGGQKTRRRQCNNPAPQDGGSPCSGPASETLAC.

An N-terminal signal peptide occupies residues 1 to 32 (MKKSWTWTWRVPAELLLLCAALGCLCVPGSRS). Positions 33–54 (ERPRSLEPTVVNRSLAKSRHSR) are excised as a propeptide. A glycan (N-linked (GlcNAc...) asparagine) is linked at Asn-44. Residues 64 to 117 (DCELSSWSSWTMCDPCQKKRYRHAYLLRPSQFNGEPCNFSDKEVEDCATSRPCR) form the TSP type-1 1 domain. 7 disulfides stabilise this stretch: Cys-65/Cys-100, Cys-76/Cys-110, Cys-79/Cys-116, Cys-122/Cys-133, Cys-127/Cys-146, Cys-140/Cys-155, and Cys-162/Cys-200. C-linked (Man) tryptophan glycosylation is found at Trp-70 and Trp-73. The N-linked (GlcNAc...) asparagine glycan is linked to Asn-101. The 38-residue stretch at 120 to 157 (VRCEGFVCAQTGRCVNRRLLCNGDNDCGDQSDEANCRK) folds into the LDL-receptor class A domain. 6 residues coordinate Ca(2+): Leu-138, Asn-141, Asp-143, Asp-145, Asp-151, and Glu-152. The MACPF domain maps to 158–504 (IYKKCHHEME…EFQGEVSPCR (347 aa)). 4 beta stranded membrane-spanning segments follow: residues 252-259 (STFNLGFK), 262-269 (SIFEFGIN), 379-386 (AKNDFKLG), and 392-399 (VYVSLGVS). Cys-378 and Cys-403 are disulfide-bonded. Position 418 is a phosphothreonine (Thr-418). 4 cysteine pairs are disulfide-bonded: Cys-503–Cys-550, Cys-505–Cys-521, Cys-508–Cys-523, and Cys-525–Cys-534. The EGF-like domain occupies 505–535 (CAPCQGNGVPVQKGSRCDCICPVGFQGSACE). In terms of domain architecture, TSP type-1 2 spans 545–588 (DGRWSCWSRWSSCSGGQKTRRRQCNNPAPQDGGSPCSGPASETL). C-linked (Man) tryptophan glycans are attached at residues Trp-551 and Trp-554. Cys-557 and Cys-590 are joined by a disulfide. Residues 557–590 (CSGGQKTRRRQCNNPAPQDGGSPCSGPASETLAC) are disordered.

This sequence belongs to the complement C6/C7/C8/C9 family. Heterotrimer of 3 chains: alpha (C8A), beta (C8B) and gamma (C8G); the alpha and gamma chains are disulfide bonded. Component of the membrane attack complex (MAC), composed of complement C5b, C6, C7, C8A, C8B, C8G and multiple copies of the pore-forming subunit C9. In terms of processing, N-glycosylated; contains one or two bound glycans. Not O-glycosylated.

The protein localises to the secreted. It localises to the target cell membrane. Its activity is regulated as follows. Membrane attack complex (MAC) assembly is inhibited by CD59, thereby protecting self-cells from damage during complement activation. CD59 acts by binding to the beta-haipins of C8 (C8A and C8B), forming an intermolecular beta-sheet that prevents incorporation of the multiple copies of C9 required for complete formation of the osmolytic pore. MAC assembly is also inhibited by clusterin (CLU) chaperones that inhibit polymerization of C9. Component of the membrane attack complex (MAC), a multiprotein complex activated by the complement cascade, which inserts into a target cell membrane and forms a pore, leading to target cell membrane rupture and cell lysis. The MAC is initiated by proteolytic cleavage of C5 into complement C5b in response to the classical, alternative, lectin and GZMK complement pathways. The complement pathways consist in a cascade of proteins that leads to phagocytosis and breakdown of pathogens and signaling that strengthens the adaptive immune system. C8B, together with C8A and C8G, inserts into the target membrane, but does not form pores by itself. During MAC assembly, associates with C5b, C6 and C7 to form the C5b8 intermediate complex that inserts into the target membrane and traverses the bilayer increasing membrane rigidity. The chain is Complement component C8 beta chain (C8B) from Oryctolagus cuniculus (Rabbit).